The primary structure comprises 266 residues: Undecaprenyl-diphosphatase 1 (266 aa).

A run of 8 helical transmembrane segments spans residues 1–21, 39–59, 83–103, 113–133, 141–161, 189–209, 218–238, and 244–264; these read MSII…FLPI, QGLA…VIYF, SKLG…GLLL, SAWV…YADA, IYQL…VAMI, FLLA…ELAL, TLLL…YMFL, and MGML…IVFL.

This sequence belongs to the UppP family.

It is found in the cell inner membrane. It catalyses the reaction di-trans,octa-cis-undecaprenyl diphosphate + H2O = di-trans,octa-cis-undecaprenyl phosphate + phosphate + H(+). Functionally, catalyzes the dephosphorylation of undecaprenyl diphosphate (UPP). Confers resistance to bacitracin. The chain is Undecaprenyl-diphosphatase 1 from Pseudoalteromonas translucida (strain TAC 125).